Here is a 146-residue protein sequence, read N- to C-terminus: Hemoglobin subunit beta (146 aa).

Val-1 bears the N-acetylvaline mark. One can recognise a Globin domain in the interval 2–146 (HLTAAEKSAI…VANALAHKYH (145 aa)). Position 63 (His-63) interacts with heme b. Lys-82 carries the post-translational modification N6-acetyllysine. His-92 is a heme b binding site. The residue at position 93 (Cys-93) is an S-nitrosocysteine. Lys-144 is subject to N6-acetyllysine.

Belongs to the globin family. Heterotetramer of two alpha chains and two beta chains. Red blood cells.

Involved in oxygen transport from the lung to the various peripheral tissues. In Cavia porcellus (Guinea pig), this protein is Hemoglobin subunit beta (HBB).